The following is a 529-amino-acid chain: MFS glucose transporter mfs1 (529 aa).

Transmembrane regions (helical) follow at residues 7–27, 52–72, 86–106, 109–129, 138–158, 179–199, 272–292, 301–321, 330–350, 375–395, 415–439, and 446–464; these read VYFLCGFATLGGGLFGFDISS, SITCAMPFGSLVGALCSSFIA, ILWIIGSIFMCASNGIPLLVV, VIAGGCVGIASAMVPVYQAEI, VISLQQWAITWGILIQYFIQY, IPWGIQIVPGVILFFGMFLFP, LQMWSQLCGMNVMMYYIVYIM, LLTASIQYILNTALTLPAIIY, AILIGFFLQAIFLYLEGGLQG, AVGKAIIALSYLFVCSFATTI, AVSLATASNWIWNCLLALFVPPLLW, and YMIFAAFNTAAFIHMFLTA.

The protein belongs to the major facilitator superfamily. Sugar transporter (TC 2.A.1.1) family.

Its subcellular location is the membrane. Functionally, probable MFS glucose transporter; part of the gene cluster 27 that mediates the biosynthesis of asparasone A, a sclerotium-specific anthraquinone pigment important for sclerotial survival. The chain is MFS glucose transporter mfs1 from Aspergillus flavus (strain ATCC 200026 / FGSC A1120 / IAM 13836 / NRRL 3357 / JCM 12722 / SRRC 167).